The sequence spans 718 residues: Polyribonucleotide nucleotidyltransferase (718 aa).

The Mg(2+) site is built by D496 and D502. In terms of domain architecture, KH spans 563–622 (PRLLTIKIDPDMIGLVIGPGGKTIKGITEETGAKIDIEDDGTVTISAVDENKAKRARNIV). The S1 motif domain maps to 632–700 (GDVYAGRVTR…NKGRINLTRL (69 aa)).

May form homodimers or higher order multimers. Interacts with RNase E (rne). Requires Mg(2+) as cofactor.

The protein localises to the cytoplasm. The catalysed reaction is RNA(n+1) + phosphate = RNA(n) + a ribonucleoside 5'-diphosphate. Its function is as follows. Involved in mRNA degradation. Catalyzes the phosphorolysis of single-stranded polyribonucleotides processively in the 3'- to 5'-direction. The protein is Polyribonucleotide nucleotidyltransferase of Nostoc sp. (strain PCC 7120 / SAG 25.82 / UTEX 2576).